A 967-amino-acid polypeptide reads, in one-letter code: LRR receptor-like serine/threonine-protein kinase ERL2 (967 aa).

The signal sequence occupies residues 1-27 (MRRIETMKGLFFCLGMVVFMLLGSVSP). The Extracellular segment spans residues 28–585 (MNNEGKALMA…SLPKSQVFTR (558 aa)). N-linked (GlcNAc...) asparagine glycans are attached at residues asparagine 70 and asparagine 79. LRR repeat units follow at residues 74 to 97 (NVVS…GDLM), 98 to 120 (NLQS…IGNC), 122 to 145 (SLAY…SKLK), 146 to 166 (QLEF…ATLT), 170 to 192 (NLKT…LYWN), 194 to 216 (VLQY…MCQL), 218 to 240 (GLWY…IGNC), 242 to 261 (SFEI…PYNI), 265 to 287 (QVAT…IGLM), 289 to 311 (ALAV…LGNL), 313 to 335 (FTGK…LGNM), 337 to 359 (RLSY…LGKL), 361 to 382 (QLFE…NISS), 385 to 406 (ALNQ…EFRN), 409 to 431 (SLTY…LGHI), 433 to 456 (NLDT…GDLE), 457 to 479 (HLLI…FGNL), 481 to 503 (SIQI…LGQL), 505 to 527 (NINS…LTNC), and 529 to 550 (SLAN…MKNF). Asparagine 228 and asparagine 239 each carry an N-linked (GlcNAc...) asparagine glycan. Residues asparagine 310 and asparagine 334 are each glycosylated (N-linked (GlcNAc...) asparagine). An N-linked (GlcNAc...) asparagine glycan is attached at asparagine 379. 4 N-linked (GlcNAc...) asparagine glycosylation sites follow: asparagine 414, asparagine 443, asparagine 462, and asparagine 469. Asparagine 534, asparagine 539, and asparagine 549 each carry an N-linked (GlcNAc...) asparagine glycan. The chain crosses the membrane as a helical span at residues 586 to 606 (VAVICMVLGFITLICMIFIAV). Topologically, residues 607 to 967 (YKSKQQKPVL…FREDISKSSL (361 aa)) are cytoplasmic. Threonine 640 and threonine 648 each carry phosphothreonine. Residues 651–921 (LDEKYIIGYG…EVSRVLLSLV (271 aa)) form the Protein kinase domain. Residues 657–665 (IGYGASSTV) and lysine 679 contribute to the ATP site. Phosphotyrosine is present on residues tyrosine 724 and tyrosine 763. Aspartate 776 acts as the Proton acceptor in catalysis. The residue at position 818 (tyrosine 818) is a Phosphotyrosine. Threonine 826 carries the post-translational modification Phosphothreonine. The tract at residues 921–955 (VPSPPPKKLPSPAKVQEGEERRESHSSDTTTPQWF) is disordered. The segment covering 936 to 946 (QEGEERRESHS) has biased composition (basic and acidic residues).

It belongs to the protein kinase superfamily. Ser/Thr protein kinase family. In terms of tissue distribution, mostly expressed in developing organs, including bud clusters, flowers, siliques and young rosettes. Also detected in mature aboveground organs, such as leaves, stems and pedicels, but barely in roots.

It localises to the membrane. It catalyses the reaction L-seryl-[protein] + ATP = O-phospho-L-seryl-[protein] + ADP + H(+). The enzyme catalyses L-threonyl-[protein] + ATP = O-phospho-L-threonyl-[protein] + ADP + H(+). In terms of biological role, receptor kinase that regulates inflorescence architecture and organ shape as well as stomatal patterning, including density and clustering, together with ERL1 and ER. The chain is LRR receptor-like serine/threonine-protein kinase ERL2 (ERL2) from Arabidopsis thaliana (Mouse-ear cress).